A 211-amino-acid chain; its full sequence is Arginine exporter protein ArgO (211 aa).

6 helical membrane-spanning segments follow: residues 1 to 21 (MISY…PLGP), 37 to 57 (LMIA…GIFG), 68 to 88 (LLAL…FGAL), 111 to 131 (IIAT…DTFV), 147 to 167 (WFAL…ALLA), and 179 to 199 (AQRI…FQLA).

Belongs to the LysE/ArgO transporter (TC 2.A.75) family.

The protein localises to the cell inner membrane. It catalyses the reaction L-arginine(in) = L-arginine(out). Involved in the export of arginine. Important to control the intracellular level of arginine and the correct balance between arginine and lysine. The sequence is that of Arginine exporter protein ArgO from Salmonella paratyphi B (strain ATCC BAA-1250 / SPB7).